A 495-amino-acid chain; its full sequence is MSSKQEKTKARLPRGFVDRTSAQLYAIEVMIAQIRQVYELYGFEALETPIFEYTDVLGKFLPDEDRPNAGVFSLQDDDEQWMSLRYDLTAPLARYFSENFETLPKPYRSYRLGFVFRNEKPGPGRFRQFMQFDADIVGTPTVAADAEICMMAADSLQKLGFQHHDYVIRLNNRKILDAVLEKVGLAGSEQAQRRLTVLRAIDKLDKFGLEGVRLLLGKGRLDESGDFTKGAELKDKEIDGILSLLTIEVGTAEETFDALRKIVDQSEEGLEGVRELEEMQAIFAENDTQNRIKIDPSVVRGLEYYTGPVFEAALLFDVLNDDGQKVVFGSVGGGGRYDGLVARFRGENIPATGFSIGVSRLIAALQNLGKLPVKEKTGPVVVLMMDKEPEIVARYQKMVMQLRSAGIPAELYLGASGMKAQMKYADRRQAPCVVIQGSQERESGTIQIKDLVEGARLSHEIKDNQTWRESRPAQVTVDEEQLVKTVQDILAAQKR.

Belongs to the class-II aminoacyl-tRNA synthetase family. Homodimer.

The protein localises to the cytoplasm. It catalyses the reaction tRNA(His) + L-histidine + ATP = L-histidyl-tRNA(His) + AMP + diphosphate + H(+). The sequence is that of Histidine--tRNA ligase from Bartonella henselae (strain ATCC 49882 / DSM 28221 / CCUG 30454 / Houston 1) (Rochalimaea henselae).